Reading from the N-terminus, the 210-residue chain is Redox-sensing transcriptional repressor Rex (210 aa).

Residues 17–56 (KYHRYLGNLMRNDVDRISSKELSEKIGFTASQIRQDLNCF) constitute a DNA-binding region (H-T-H motif). Residue 91–96 (GAGNIG) coordinates NAD(+).

It belongs to the transcriptional regulatory Rex family. As to quaternary structure, homodimer.

The protein resides in the cytoplasm. Modulates transcription in response to changes in cellular NADH/NAD(+) redox state. This Clostridium kluyveri (strain ATCC 8527 / DSM 555 / NBRC 12016 / NCIMB 10680 / K1) protein is Redox-sensing transcriptional repressor Rex.